We begin with the raw amino-acid sequence, 647 residues long: Threonine--tRNA ligase (647 aa).

The region spanning 1 to 61 (MIKITFPDGA…EEDGSIEIVT (61 aa)) is the TGS domain. The interval 240–538 (DHRKLGKELD…LIETYKGAFP (299 aa)) is catalytic. Positions 334, 385, and 515 each coordinate Zn(2+).

The protein belongs to the class-II aminoacyl-tRNA synthetase family. In terms of assembly, homodimer. Zn(2+) is required as a cofactor.

The protein resides in the cytoplasm. The enzyme catalyses tRNA(Thr) + L-threonine + ATP = L-threonyl-tRNA(Thr) + AMP + diphosphate + H(+). Its function is as follows. Catalyzes the attachment of threonine to tRNA(Thr) in a two-step reaction: L-threonine is first activated by ATP to form Thr-AMP and then transferred to the acceptor end of tRNA(Thr). Also edits incorrectly charged L-seryl-tRNA(Thr). The sequence is that of Threonine--tRNA ligase from Streptococcus pyogenes serotype M28 (strain MGAS6180).